The following is a 73-amino-acid chain: Defensin-like protein 34 (73 aa).

An N-terminal signal peptide occupies residues 1–25 (MASNKVSFFLVLCLCVLSTAEFGEA). 3 cysteine pairs are disulfide-bonded: Cys33-Cys59, Cys45-Cys68, and Cys49-Cys70.

It belongs to the DEFL family.

The protein resides in the secreted. In Arabidopsis thaliana (Mouse-ear cress), this protein is Defensin-like protein 34.